A 237-amino-acid polypeptide reads, in one-letter code: Sugar fermentation stimulation protein homolog (237 aa).

Belongs to the SfsA family.

The polypeptide is Sugar fermentation stimulation protein homolog (Pseudomonas fluorescens (strain Pf0-1)).